The following is a 62-amino-acid chain: Large ribosomal subunit protein eL24 (62 aa).

The Zn(2+) site is built by Cys-6, Cys-9, Cys-32, and Cys-36. The C4-type zinc-finger motif lies at 6 to 36 (CSFCEGTIEPGCGKKYVKKDGSVMHFCSSKC).

It belongs to the eukaryotic ribosomal protein eL24 family. In terms of assembly, part of the 50S ribosomal subunit. Forms a cluster with proteins L3 and L14. It depends on Zn(2+) as a cofactor.

Binds to the 23S rRNA. This Methanococcus maripaludis (strain C5 / ATCC BAA-1333) protein is Large ribosomal subunit protein eL24.